Here is a 341-residue protein sequence, read N- to C-terminus: tRNA N6-adenosine threonylcarbamoyltransferase (341 aa).

Fe cation is bound by residues His115 and His119. Substrate is bound by residues 137 to 141, Asp170, Gly183, Asp187, and Asn276; that span reads IVSGG. Residue Asp304 participates in Fe cation binding.

It belongs to the KAE1 / TsaD family. The cofactor is Fe(2+).

The protein localises to the cytoplasm. The catalysed reaction is L-threonylcarbamoyladenylate + adenosine(37) in tRNA = N(6)-L-threonylcarbamoyladenosine(37) in tRNA + AMP + H(+). Its function is as follows. Required for the formation of a threonylcarbamoyl group on adenosine at position 37 (t(6)A37) in tRNAs that read codons beginning with adenine. Is involved in the transfer of the threonylcarbamoyl moiety of threonylcarbamoyl-AMP (TC-AMP) to the N6 group of A37, together with TsaE and TsaB. TsaD likely plays a direct catalytic role in this reaction. This Staphylococcus aureus (strain MRSA252) protein is tRNA N6-adenosine threonylcarbamoyltransferase.